Here is a 139-residue protein sequence, read N- to C-terminus: ATP synthase epsilon chain 2 (139 aa).

This sequence belongs to the ATPase epsilon chain family. In terms of assembly, F-type ATPases have 2 components, CF(1) - the catalytic core - and CF(0) - the membrane proton channel. CF(1) has five subunits: alpha(3), beta(3), gamma(1), delta(1), epsilon(1). CF(0) has three main subunits: a, b and c.

It is found in the cell inner membrane. In terms of biological role, produces ATP from ADP in the presence of a proton gradient across the membrane. The protein is ATP synthase epsilon chain 2 (atpC2) of Ralstonia nicotianae (strain ATCC BAA-1114 / GMI1000) (Ralstonia solanacearum).